We begin with the raw amino-acid sequence, 546 residues long: MAAKDVKFGRTAREKMLRGVDILADAVKVTLGPKGRNVVIEKSFGAPRITKDGVSVAKEVELEDKFENMGAQMLREVASKTNDTAGDGTTTATVLGQAIVQEGAKAVAAGMNPMDLKRGIDLAVNEVVAELLKKAKKINTSEEVAQVGTISANGEAEIGKMIAEAMQKVGNEGVITVEEAKTAETELEVVEGMQFDRGYLSPYFVTNPEKMVADLEDAYILLHEKKLSNLQALLPVLEAVVQTSKPLLIIAEDVEGEALATLVVNKLRGGLKIAAVKAPGFGDRRKAMLEDIAILTGGQVISEDLGIKLESVTLDMLGRAKKVSISKENTTIVDGAGQKAEIDARVGQIKQQIEETTLDYDREKLQERLAKLAGGVAVIRVGGATEVEVKEKKDRVDDALNATRAAVEEGIVAGGGTALLRASTKITAKGVNADQEAGINIVRRAIQAPARQITTNAGEEASVIVGKILENTSETFGYNTANGEYGDLISLGIVDPVKVVRTALQNAASVAGLLITTEAMIAELPKKDAAPAGMPGGMGGMGGMDF.

ATP-binding positions include T30 to P33, K51, D87 to T91, G415, and D495.

This sequence belongs to the chaperonin (HSP60) family. In terms of assembly, forms a cylinder of 14 subunits composed of two heptameric rings stacked back-to-back. Interacts with the co-chaperonin GroES.

It is found in the cytoplasm. The catalysed reaction is ATP + H2O + a folded polypeptide = ADP + phosphate + an unfolded polypeptide.. Together with its co-chaperonin GroES, plays an essential role in assisting protein folding. The GroEL-GroES system forms a nano-cage that allows encapsulation of the non-native substrate proteins and provides a physical environment optimized to promote and accelerate protein folding. This chain is Chaperonin GroEL, found in Brucella ovis (strain ATCC 25840 / 63/290 / NCTC 10512).